The primary structure comprises 208 residues: Ribosomal RNA large subunit methyltransferase E (208 aa).

5 residues coordinate S-adenosyl-L-methionine: Gly-63, Trp-65, Asp-83, Asp-99, and Asp-124. Lys-164 (proton acceptor) is an active-site residue.

Belongs to the class I-like SAM-binding methyltransferase superfamily. RNA methyltransferase RlmE family.

It localises to the cytoplasm. The catalysed reaction is uridine(2552) in 23S rRNA + S-adenosyl-L-methionine = 2'-O-methyluridine(2552) in 23S rRNA + S-adenosyl-L-homocysteine + H(+). In terms of biological role, specifically methylates the uridine in position 2552 of 23S rRNA at the 2'-O position of the ribose in the fully assembled 50S ribosomal subunit. The sequence is that of Ribosomal RNA large subunit methyltransferase E from Salmonella paratyphi A (strain ATCC 9150 / SARB42).